A 609-amino-acid chain; its full sequence is Oxidoreductase tpcJ (609 aa).

An N-terminal signal peptide occupies residues 1-16 (MITVIKWLVSGCCALA). Residues Asn-63, Asn-107, Asn-113, Asn-240, Asn-283, Asn-471, and Asn-601 are each glycosylated (N-linked (GlcNAc...) asparagine). 3 Plastocyanin-like domains span residues 66–186 (VSQQ…HGPS), 196–351 (PWLL…RYDE), and 429–567 (VDWK…EQPK).

Belongs to the multicopper oxidase family. In terms of tissue distribution, specifically expressed in conidia.

The protein operates within secondary metabolite biosynthesis. Its function is as follows. Oxidoreductase; part of the gene cluster that mediates the biosynthesis of trypacidin, a mycotoxin with antiprotozoal activity and that plays a role in the infection process. The pathway begins with the synthesis of atrochrysone thioester by the polyketide synthase (PKS) tpcC. The atrochrysone carboxyl ACP thioesterase tpcB then breaks the thioester bond and releases the atrochrysone carboxylic acid from tpcC. The decarboxylase tpcK converts atrochrysone carboxylic acid to atrochrysone which is further reduced into emodin anthrone. The next step is performed by the emodin anthrone oxygenase tpcL that catalyzes the oxidation of emodinanthrone to emodin. Emodin O-methyltransferase encoded by tpcA catalyzes methylation of the 8-hydroxy group of emodin to form questin. Ring cleavage of questin by questin oxidase tpcI leads to desmethylsulochrin via several intermediates including questin epoxide. Another methylation step catalyzed by tpcM leads to the formation of sulochrin which is further converted to monomethylsulfochrin by tpcH. Finally, the tpcJ catalyzes the conversion of monomethylsulfochrin to trypacidin. Trypacidin is toxic for human pulmonary and bronchial epithelial cells by initiating the intracellular formation of nitric oxide (NO) and hydrogen peroxide (H(2)O(2)), thus triggering host necrotic cell death. The trypacidin pathway is also able to produce endocrocin via a distinct route from the endocrocin Enc pathway. This chain is Oxidoreductase tpcJ, found in Aspergillus fumigatus (strain ATCC MYA-4609 / CBS 101355 / FGSC A1100 / Af293) (Neosartorya fumigata).